A 394-amino-acid polypeptide reads, in one-letter code: Stabilizer of axonemal microtubules 2 (394 aa).

Mn stretches follow at residues 110–122, 144–158, 244–256, 278–292, 312–324, and 346–360; these read STTFQDDYVPQEI, DTSHRRDYVPHQLEV, NSTSHLDYVPYQA, KSTTKEDFPAWEICR, LSTFRSHFVPHEL, and VTMYSIQFTPKKQEI.

This sequence belongs to the FAM154 family.

The polypeptide is Stabilizer of axonemal microtubules 2 (Saxo2) (Mus musculus (Mouse)).